The primary structure comprises 305 residues: tRNA pseudouridine synthase B (305 aa).

The active-site Nucleophile is the aspartate 38.

This sequence belongs to the pseudouridine synthase TruB family. Type 1 subfamily.

It carries out the reaction uridine(55) in tRNA = pseudouridine(55) in tRNA. In terms of biological role, responsible for synthesis of pseudouridine from uracil-55 in the psi GC loop of transfer RNAs. In Latilactobacillus sakei subsp. sakei (strain 23K) (Lactobacillus sakei subsp. sakei), this protein is tRNA pseudouridine synthase B.